The primary structure comprises 378 residues: TelA-like protein SAB1262 (378 aa).

This sequence belongs to the TelA family.

This Staphylococcus aureus (strain bovine RF122 / ET3-1) protein is TelA-like protein SAB1262.